Reading from the N-terminus, the 343-residue chain is S-adenosylmethionine:tRNA ribosyltransferase-isomerase (343 aa).

Belongs to the QueA family. In terms of assembly, monomer.

The protein resides in the cytoplasm. It catalyses the reaction 7-aminomethyl-7-carbaguanosine(34) in tRNA + S-adenosyl-L-methionine = epoxyqueuosine(34) in tRNA + adenine + L-methionine + 2 H(+). It functions in the pathway tRNA modification; tRNA-queuosine biosynthesis. Transfers and isomerizes the ribose moiety from AdoMet to the 7-aminomethyl group of 7-deazaguanine (preQ1-tRNA) to give epoxyqueuosine (oQ-tRNA). The polypeptide is S-adenosylmethionine:tRNA ribosyltransferase-isomerase (Pelobacter propionicus (strain DSM 2379 / NBRC 103807 / OttBd1)).